The primary structure comprises 116 residues: Staphylococcal complement inhibitor (116 aa).

Residues 1 to 31 form the signal peptide; it reads MKIRKSILAGTLAIVLASPLVTNLDKNEAQA. Residues 62-79 are essential for activity; it reads LATGSLNTYYKRTIKISG.

This sequence belongs to the SCIN family.

It is found in the secreted. Functionally, involved in countering the first line of host defense mechanisms. Efficiently inhibits opsonization, phagocytosis and killing of S.aureus by human neutrophils. Acts by binding and stabilizing human C3 convertases (C4b2a and C3bBb), leading to their inactivation. The convertases are no longer able to cleave complement C3, therefore preventing further C3b deposition on the bacterial surface and phagocytosis of the bacterium. Also prevents C5a-induced neutrophil responses. The chain is Staphylococcal complement inhibitor (scn) from Staphylococcus aureus (strain N315).